The chain runs to 100 residues: Urease subunit gamma (100 aa).

It belongs to the urease gamma subunit family. Heterotrimer of UreA (gamma), UreB (beta) and UreC (alpha) subunits. Three heterotrimers associate to form the active enzyme.

The protein resides in the cytoplasm. The enzyme catalyses urea + 2 H2O + H(+) = hydrogencarbonate + 2 NH4(+). Its pathway is nitrogen metabolism; urea degradation; CO(2) and NH(3) from urea (urease route): step 1/1. This chain is Urease subunit gamma, found in Vibrio parahaemolyticus.